We begin with the raw amino-acid sequence, 486 residues long: Regulatory protein ViaA (486 aa).

This sequence belongs to the ViaA family. Homodimer. Interacts with RavA.

Its subcellular location is the cytoplasm. Component of the RavA-ViaA chaperone complex, which may act on the membrane to optimize the function of some of the respiratory chains. ViaA stimulates the ATPase activity of RavA. This chain is Regulatory protein ViaA, found in Erwinia tasmaniensis (strain DSM 17950 / CFBP 7177 / CIP 109463 / NCPPB 4357 / Et1/99).